The chain runs to 193 residues: Large ribosomal subunit protein bL17m (193 aa).

Belongs to the bacterial ribosomal protein bL17 family. As to quaternary structure, component of the mitochondrial large ribosomal subunit (mt-LSU). Mature N.crassa 74S mitochondrial ribosomes consist of a small (37S) and a large (54S) subunit. The 37S small subunit contains a 16S ribosomal RNA (16S mt-rRNA) and 32 different proteins. The 54S large subunit contains a 23S rRNA (23S mt-rRNA) and 42 different proteins.

It localises to the mitochondrion. Its function is as follows. Component of the mitochondrial ribosome (mitoribosome), a dedicated translation machinery responsible for the synthesis of mitochondrial genome-encoded proteins, including at least some of the essential transmembrane subunits of the mitochondrial respiratory chain. The mitoribosomes are attached to the mitochondrial inner membrane and translation products are cotranslationally integrated into the membrane. This is Large ribosomal subunit protein bL17m (mrpl8) from Neurospora crassa (strain ATCC 24698 / 74-OR23-1A / CBS 708.71 / DSM 1257 / FGSC 987).